The sequence spans 109 residues: Large ribosomal subunit protein uL23 (109 aa).

This sequence belongs to the universal ribosomal protein uL23 family. Part of the 50S ribosomal subunit. Contacts protein L29, and trigger factor when it is bound to the ribosome.

Functionally, one of the early assembly proteins it binds 23S rRNA. One of the proteins that surrounds the polypeptide exit tunnel on the outside of the ribosome. Forms the main docking site for trigger factor binding to the ribosome. In Chlorobium phaeobacteroides (strain BS1), this protein is Large ribosomal subunit protein uL23.